We begin with the raw amino-acid sequence, 129 residues long: Small ribosomal subunit protein uS11 (129 aa).

This sequence belongs to the universal ribosomal protein uS11 family. As to quaternary structure, part of the 30S ribosomal subunit. Interacts with proteins S7 and S18. Binds to IF-3.

Located on the platform of the 30S subunit, it bridges several disparate RNA helices of the 16S rRNA. Forms part of the Shine-Dalgarno cleft in the 70S ribosome. This chain is Small ribosomal subunit protein uS11, found in Methylobacterium radiotolerans (strain ATCC 27329 / DSM 1819 / JCM 2831 / NBRC 15690 / NCIMB 10815 / 0-1).